The sequence spans 348 residues: Signal recognition particle receptor FtsY (348 aa).

Residues 143–150 (GVNGVGKT), 225–229 (DTSGR), and 289–292 (TKMD) each bind GTP.

The protein belongs to the GTP-binding SRP family. FtsY subfamily. As to quaternary structure, part of the signal recognition particle protein translocation system, which is composed of SRP and FtsY.

Its subcellular location is the cell membrane. It localises to the cytoplasm. The enzyme catalyses GTP + H2O = GDP + phosphate + H(+). In terms of biological role, involved in targeting and insertion of nascent membrane proteins into the cytoplasmic membrane. Acts as a receptor for the complex formed by the signal recognition particle (SRP) and the ribosome-nascent chain (RNC). This is Signal recognition particle receptor FtsY from Mycoplasma pneumoniae (strain ATCC 29342 / M129 / Subtype 1) (Mycoplasmoides pneumoniae).